The chain runs to 360 residues: Phenylalanine--tRNA ligase alpha subunit (360 aa).

Glu260 contacts Mg(2+).

This sequence belongs to the class-II aminoacyl-tRNA synthetase family. Phe-tRNA synthetase alpha subunit type 1 subfamily. In terms of assembly, tetramer of two alpha and two beta subunits. It depends on Mg(2+) as a cofactor.

It is found in the cytoplasm. It carries out the reaction tRNA(Phe) + L-phenylalanine + ATP = L-phenylalanyl-tRNA(Phe) + AMP + diphosphate + H(+). The sequence is that of Phenylalanine--tRNA ligase alpha subunit from Methylocella silvestris (strain DSM 15510 / CIP 108128 / LMG 27833 / NCIMB 13906 / BL2).